A 333-amino-acid chain; its full sequence is Fibronectin type III domain-containing protein 11 (333 aa).

One can recognise a Fibronectin type-III domain in the interval 212–310 (PVMFDRKESV…DSLTLHTRPG (99 aa)). A disordered region spans residues 307–333 (TRPGPPEGLAPSRLGKLGLSLTTPSER).

This chain is Fibronectin type III domain-containing protein 11, found in Bos taurus (Bovine).